The primary structure comprises 617 residues: Chaperone protein DnaK (617 aa).

The interval 579–617 is disordered; it reads KAQQEAQQASGEAGSADARGPDETVVDADYEVVDDEKRK. The span at 580–594 shows a compositional bias: low complexity; that stretch reads AQQEAQQASGEAGSA. A compositionally biased stretch (acidic residues) spans 602-617; that stretch reads TVVDADYEVVDDEKRK.

It belongs to the heat shock protein 70 family.

In terms of biological role, acts as a chaperone. This is Chaperone protein DnaK from Methanosarcina acetivorans (strain ATCC 35395 / DSM 2834 / JCM 12185 / C2A).